Reading from the N-terminus, the 239-residue chain is Increased recombination centers protein 22-1 (239 aa).

Residues 1–19 (MKLSTIFTAFAATIATVAG) form the signal peptide. Residues 20-161 (YETTGSKQTV…AAVSFFDPRL (142 aa)) are Lumenal-facing. The helical transmembrane segment at 162–182 (IFLELVLLITFAGLIYVGYEI) threads the bilayer. Over 183-239 (WGKQYFKGVAPVKAKKVSAAKASSPVASGPSTTSATGYDTNWIPESHLKQKKTKKVN) the chain is Cytoplasmic. Over residues 201 to 213 (AAKASSPVASGPS) the composition is skewed to low complexity. Residues 201–222 (AAKASSPVASGPSTTSATGYDT) form a disordered region.

It belongs to the IRC22 family.

The protein resides in the endoplasmic reticulum membrane. Is probably involved in a pathway contributing to genomic integrity. The chain is Increased recombination centers protein 22-1 (IRC22-1) from Candida albicans (strain SC5314 / ATCC MYA-2876) (Yeast).